Reading from the N-terminus, the 589-residue chain is uncharacterized protein (589 aa).

A run of 14 helical transmembrane segments spans residues 90–110, 128–148, 162–182, 189–209, 217–237, 245–265, 284–304, 311–331, 355–375, 390–410, 419–439, 448–468, 483–503, and 545–565; these read YIVIPGLMLSIFLSALDQTVI, SWIGTAYTLAQTSILPFCGIM, IVLFLFGSAMCGAAQNMLWLV, GIGGGGITSLVTIVIADITPL, GCMGVTWGLASVMGPLIGGAI, WIFFINLPTGGLSLALLIFFL, FVGIITITTGVVLFLVGLNIG, AHANVLCYLIFGILCIAGFVV, VMVTSFLHYYIVSTITYYIPV, VHTLSLAVVSSLLSAVSGMGI, PMIGGWIVLLAGTGSMIAIYY, GFLALTAVGTGNLFQPNLIAV, AFMLLRNMGASVGISMGAVIY, and IRMIWIVNCPVAGVGMLLSFF.

The protein belongs to the major facilitator superfamily. TCR/Tet family.

The protein resides in the membrane. This is an uncharacterized protein from Schizosaccharomyces pombe (strain 972 / ATCC 24843) (Fission yeast).